The sequence spans 390 residues: Succinyl-diaminopimelate desuccinylase 1 (390 aa).

His-76 contacts Zn(2+). Residue Asp-78 is part of the active site. Position 109 (Asp-109) interacts with Zn(2+). Catalysis depends on Glu-143, which acts as the Proton acceptor. Zn(2+) is bound by residues Glu-144, Glu-172, and His-363.

The protein belongs to the peptidase M20A family. DapE subfamily. Homodimer. Zn(2+) is required as a cofactor. Co(2+) serves as cofactor.

It catalyses the reaction N-succinyl-(2S,6S)-2,6-diaminopimelate + H2O = (2S,6S)-2,6-diaminopimelate + succinate. It functions in the pathway amino-acid biosynthesis; L-lysine biosynthesis via DAP pathway; LL-2,6-diaminopimelate from (S)-tetrahydrodipicolinate (succinylase route): step 3/3. Its function is as follows. Catalyzes the hydrolysis of N-succinyl-L,L-diaminopimelic acid (SDAP), forming succinate and LL-2,6-diaminopimelate (DAP), an intermediate involved in the bacterial biosynthesis of lysine and meso-diaminopimelic acid, an essential component of bacterial cell walls. In Alteromonas mediterranea (strain DSM 17117 / CIP 110805 / LMG 28347 / Deep ecotype), this protein is Succinyl-diaminopimelate desuccinylase 1.